The primary structure comprises 1450 residues: ABC transporter G family member 37 (1450 aa).

Residues V175 to E447 form the ABC transporter 1 domain. G207–T214 contacts ATP. Residues E525–F737 form the ABC transmembrane type-2 1 domain. The next 6 membrane-spanning stretches (helical) occupy residues V544 to I564, A581 to A601, F615 to F635, F661 to I681, A687 to I707, and L773 to F793. A disordered region spans residues S810–E838. Residues K817–E838 are compositionally biased toward basic and acidic residues. Residues V850 to E1103 enclose the ABC transporter 2 domain. G895 to T902 contacts ATP. The region spanning G1175–Y1389 is the ABC transmembrane type-2 2 domain. The next 7 membrane-spanning stretches (helical) occupy residues Y1194–W1214, M1226–A1246, I1282–F1302, L1313–I1333, V1339–I1359, P1365–I1385, and V1422–V1442.

Belongs to the ABC transporter superfamily. ABCG family. PDR (TC 3.A.1.205) subfamily. Expressed in roots and, to a lower extent, in seedlings.

It is found in the cell membrane. Together with ABCG36, regulates auxin homeostasis and responses by playing a dual role in coumarin (and derivatives) and in the auxin precursor indole 3-butyric acid (IBA) efflux transport, thus influencing roots and root hairs development. Mediates coumarin exudation in the rhizosphere, especially in iron (Fe) deficient conditions, with a strong specificity for highly oxygenated compounds such as scopoletin and derivatives, dihydroxyscopoletin, esculetin, fraxin, fraxetin and esculin; these molecules improve plant Fe nutrition. Involved in the cellular detoxification of xenobiotics by promoting the excretion of some auxinic herbicides including 2,4-dichlorophenoxyacetic acid (2,4-D), 4-(2,4-dichlorophenoxy)butyric acid (2,4-DB) and other members of the phenoxyalkanoic acid family as well as the polar auxin transport inhibitor, napthylphthalamic acid (NPA). May be a general defense protein. The polypeptide is ABC transporter G family member 37 (Arabidopsis thaliana (Mouse-ear cress)).